The sequence spans 563 residues: Sulfite reductase [NADPH] hemoprotein beta-component (563 aa).

Residues Cys427, Cys433, Cys472, and Cys476 each contribute to the [4Fe-4S] cluster site. Cys476 contributes to the siroheme binding site.

Belongs to the nitrite and sulfite reductase 4Fe-4S domain family. Alpha(8)-beta(8). The alpha component is a flavoprotein, the beta component is a hemoprotein. The cofactor is siroheme. [4Fe-4S] cluster is required as a cofactor.

The enzyme catalyses hydrogen sulfide + 3 NADP(+) + 3 H2O = sulfite + 3 NADPH + 4 H(+). It participates in sulfur metabolism; hydrogen sulfide biosynthesis; hydrogen sulfide from sulfite (NADPH route): step 1/1. Functionally, component of the sulfite reductase complex that catalyzes the 6-electron reduction of sulfite to sulfide. This is one of several activities required for the biosynthesis of L-cysteine from sulfate. In Acidithiobacillus ferrooxidans (strain ATCC 53993 / BNL-5-31) (Leptospirillum ferrooxidans (ATCC 53993)), this protein is Sulfite reductase [NADPH] hemoprotein beta-component.